Reading from the N-terminus, the 340-residue chain is Ketol-acid reductoisomerase (NADP(+)) (340 aa).

The KARI N-terminal Rossmann domain maps to 2-181 (VKMYYEADVK…GCTKAGVIET (180 aa)). NADP(+) is bound by residues 25-28 (YGSQ), arginine 48, serine 52, and 82-85 (DERQ). Histidine 107 is a catalytic residue. Glycine 133 provides a ligand contact to NADP(+). The KARI C-terminal knotted domain occupies 182 to 327 (SFREETETDL…EQLRGMMSWI (146 aa)). Mg(2+)-binding residues include aspartate 190, glutamate 194, glutamate 226, and glutamate 230. Substrate is bound at residue serine 251.

This sequence belongs to the ketol-acid reductoisomerase family. Requires Mg(2+) as cofactor.

The catalysed reaction is (2R)-2,3-dihydroxy-3-methylbutanoate + NADP(+) = (2S)-2-acetolactate + NADPH + H(+). The enzyme catalyses (2R,3R)-2,3-dihydroxy-3-methylpentanoate + NADP(+) = (S)-2-ethyl-2-hydroxy-3-oxobutanoate + NADPH + H(+). It participates in amino-acid biosynthesis; L-isoleucine biosynthesis; L-isoleucine from 2-oxobutanoate: step 2/4. It functions in the pathway amino-acid biosynthesis; L-valine biosynthesis; L-valine from pyruvate: step 2/4. Its function is as follows. Involved in the biosynthesis of branched-chain amino acids (BCAA). Catalyzes an alkyl-migration followed by a ketol-acid reduction of (S)-2-acetolactate (S2AL) to yield (R)-2,3-dihydroxy-isovalerate. In the isomerase reaction, S2AL is rearranged via a Mg-dependent methyl migration to produce 3-hydroxy-3-methyl-2-ketobutyrate (HMKB). In the reductase reaction, this 2-ketoacid undergoes a metal-dependent reduction by NADPH to yield (R)-2,3-dihydroxy-isovalerate. The chain is Ketol-acid reductoisomerase (NADP(+)) from Brevibacillus brevis (strain 47 / JCM 6285 / NBRC 100599).